We begin with the raw amino-acid sequence, 387 residues long: Anhydro-N-acetylmuramic acid kinase (387 aa).

ATP is bound at residue 17–24 (GTSMDGVD).

Belongs to the anhydro-N-acetylmuramic acid kinase family.

The enzyme catalyses 1,6-anhydro-N-acetyl-beta-muramate + ATP + H2O = N-acetyl-D-muramate 6-phosphate + ADP + H(+). It functions in the pathway amino-sugar metabolism; 1,6-anhydro-N-acetylmuramate degradation. Its pathway is cell wall biogenesis; peptidoglycan recycling. Catalyzes the specific phosphorylation of 1,6-anhydro-N-acetylmuramic acid (anhMurNAc) with the simultaneous cleavage of the 1,6-anhydro ring, generating MurNAc-6-P. Is required for the utilization of anhMurNAc either imported from the medium or derived from its own cell wall murein, and thus plays a role in cell wall recycling. This chain is Anhydro-N-acetylmuramic acid kinase, found in Burkholderia pseudomallei (strain K96243).